The chain runs to 627 residues: Neutral endopeptidase (627 aa).

The Peptidase M13 domain occupies 1–627 (MTRIQDDLFA…RAPENRLKIW (627 aa)). Residue His-475 participates in Zn(2+) binding. The active site involves Glu-476. Residues His-479 and Glu-535 each coordinate Zn(2+). Residue Asp-539 is the Proton donor of the active site.

Belongs to the peptidase M13 family. As to quaternary structure, monomer. The cofactor is Zn(2+).

It localises to the cytoplasm. In terms of biological role, endopeptidase with broad substrate specificity for several oligopeptides. The sequence is that of Neutral endopeptidase (pepO) from Lactococcus lactis subsp. cremoris (Streptococcus cremoris).